A 535-amino-acid polypeptide reads, in one-letter code: Bifunctional purine biosynthesis protein PurH (535 aa).

The region spanning 6–151 is the MGS-like domain; the sequence is TRLPVRRALI…KNHKDVAIVV (146 aa).

The protein belongs to the PurH family.

The enzyme catalyses (6R)-10-formyltetrahydrofolate + 5-amino-1-(5-phospho-beta-D-ribosyl)imidazole-4-carboxamide = 5-formamido-1-(5-phospho-D-ribosyl)imidazole-4-carboxamide + (6S)-5,6,7,8-tetrahydrofolate. The catalysed reaction is IMP + H2O = 5-formamido-1-(5-phospho-D-ribosyl)imidazole-4-carboxamide. Its pathway is purine metabolism; IMP biosynthesis via de novo pathway; 5-formamido-1-(5-phospho-D-ribosyl)imidazole-4-carboxamide from 5-amino-1-(5-phospho-D-ribosyl)imidazole-4-carboxamide (10-formyl THF route): step 1/1. The protein operates within purine metabolism; IMP biosynthesis via de novo pathway; IMP from 5-formamido-1-(5-phospho-D-ribosyl)imidazole-4-carboxamide: step 1/1. This is Bifunctional purine biosynthesis protein PurH from Azotobacter vinelandii (strain DJ / ATCC BAA-1303).